The sequence spans 91 residues: Ribonuclease P protein component 4 (91 aa).

Positions 48, 51, 71, and 74 each coordinate Zn(2+).

This sequence belongs to the eukaryotic/archaeal RNase P protein component 4 family. In terms of assembly, consists of a catalytic RNA component and at least 4-5 protein subunits. Zn(2+) serves as cofactor.

The protein resides in the cytoplasm. It catalyses the reaction Endonucleolytic cleavage of RNA, removing 5'-extranucleotides from tRNA precursor.. In terms of biological role, part of ribonuclease P, a protein complex that generates mature tRNA molecules by cleaving their 5'-ends. This is Ribonuclease P protein component 4 from Picrophilus torridus (strain ATCC 700027 / DSM 9790 / JCM 10055 / NBRC 100828 / KAW 2/3).